A 311-amino-acid polypeptide reads, in one-letter code: Fucose-specific lectin (311 aa).

Tandem repeats lie at residues 1–53 (MSTP…KNVI), 54–103 (AKAK…AGAK), 104–151 (FTVA…EGTN), 152–209 (LGVA…FDKA), 210–256 (PPRC…DKRT), and 257–311 (ITPV…PPAE). Residues 1 to 311 (MSTPGAQEVL…LGRRALPPAE (311 aa)) form a 6 X approximate tandem repeats region. Beta-L-fucose is bound by residues R25, E37, W44, R73, E85, W94, R126, E138, W146, R177, Q189, W198, R230, Q242, R277, and E291.

The protein belongs to the fungal fucose-specific lectin family. In terms of assembly, homodimer.

In terms of biological role, lectin that specifically binds to L-fucose and weakly reacts with mannose and N-acetyl-neuraminic acid. Has strongest preference for the alpha-1,6-fucosylated chain (core fucose) on glycoproteins among alpha-1,2-, alpha-1,3-, alpha-1,4-, and alpha-1,6-fucosylated chains. Binds to fucose residues of IgE in mice and human, causing antigen-independent IgE-mediated mast cell activation and anaphylactoid reactions in mice and is possibly implicated in allergic response to Aspergillus oryzae in humans. Induces secretion of pro-inflammatory cytokines IL6 and IL8 implicated in ocular diseases such as mycotic keratitis, probably through its interaction with host toll-like receptors TLR2 and TLR4, followed by up-regulation of pro-inflammatory cytokines. The chain is Fucose-specific lectin from Aspergillus oryzae (strain ATCC 42149 / RIB 40) (Yellow koji mold).